The sequence spans 261 residues: Ribosome-inactivating protein PD-L1/PD-L2 (261 aa).

N-linked (GlcNAc...) asparagine; in PD-L1 and PD-L2 glycans are attached at residues N10 and N43. Intrachain disulfides connect C34–C258 and C84–C105. The active site involves Y72. Position 73 (V73) interacts with substrate. A substrate-binding site is contributed by S120. Residues Y122, E175, and R178 contribute to the active site. Substrate is bound at residue R178. N255 carries an N-linked (GlcNAc...) asparagine; in PD-L1 glycan.

This sequence belongs to the ribosome-inactivating protein family. Type 1 RIP subfamily. N-glycosylated. Loss of glycosylation does not affect DNA-cleaving ability. Loss of glycosylation does not affect protein synthesis inhibition, but increases adenine polynucleotide glycosidase activity likely as a consequence of the increased accessibility of substrates to the active site pocket in the absence of glycosylation. In terms of tissue distribution, expressed in leaves (at protein level).

The catalysed reaction is Endohydrolysis of the N-glycosidic bond at one specific adenosine on the 28S rRNA.. Functionally, inhibits protein synthesis. Has adenine polynucleotide glycosidase activity on herring sperm (hs)DNA and poly(A) substrates. Cleaves supercoiled pBR322 dsDNA. This chain is Ribosome-inactivating protein PD-L1/PD-L2, found in Phytolacca dioica (Bella sombra tree).